The following is a 233-amino-acid chain: Snake venom serine protease BthaTL (233 aa).

The Peptidase S1 domain maps to 1-224; that stretch reads VIGGDECDIN…YLPWIQSIIA (224 aa). 6 cysteine pairs are disulfide-bonded: Cys-7/Cys-138, Cys-25/Cys-41, Cys-73/Cys-231, Cys-117/Cys-185, Cys-149/Cys-164, and Cys-175/Cys-200. Catalysis depends on charge relay system residues His-40 and Asp-85. Ser-179 serves as the catalytic Charge relay system.

Belongs to the peptidase S1 family. Snake venom subfamily. As to quaternary structure, monomer. As to expression, expressed by the venom gland.

The protein resides in the secreted. Functionally, snake venom serine protease that may act in the hemostasis system of the prey. This Bothrops alternatus (Urutu) protein is Snake venom serine protease BthaTL.